Here is a 768-residue protein sequence, read N- to C-terminus: DNA topoisomerase 4 subunit A (768 aa).

In terms of domain architecture, Topo IIA-type catalytic spans 38-521; that stretch reads LPEVSDGQKP…AGRAVLTQTA (484 aa). Residue Tyr126 is the O-(5'-phospho-DNA)-tyrosine intermediate of the active site.

The protein belongs to the type II topoisomerase GyrA/ParC subunit family. ParC type 1 subfamily. Heterotetramer composed of ParC and ParE.

The protein localises to the cell membrane. It catalyses the reaction ATP-dependent breakage, passage and rejoining of double-stranded DNA.. Topoisomerase IV is essential for chromosome segregation. It relaxes supercoiled DNA. Performs the decatenation events required during the replication of a circular DNA molecule. This Neisseria gonorrhoeae protein is DNA topoisomerase 4 subunit A.